A 140-amino-acid polypeptide reads, in one-letter code: uncharacterized protein (140 aa).

N-linked (GlcNAc...) asparagine; by host glycosylation occurs at asparagine 86. Residues isoleucine 92–leucine 112 form a helical membrane-spanning segment.

This sequence belongs to the asfivirus B117L family.

It is found in the host membrane. The protein resides in the virion. This is an uncharacterized protein from African swine fever virus (isolate Pig/Kenya/KEN-50/1950) (ASFV).